Consider the following 77-residue polypeptide: Conotoxin ArMSGL-0141 (77 aa).

The N-terminal stretch at 1–18 (MSGLGILVLTLLLLVYMA) is a signal peptide. The propeptide occupies 19-44 (TSHQDAGEKQATQRDAINVRRRRSLT). Disulfide bonds link cysteine 51/cysteine 63, cysteine 55/cysteine 71, and cysteine 62/cysteine 75. Phenylalanine 76 is subject to Phenylalanine amide.

This sequence belongs to the conotoxin O3 superfamily. In terms of tissue distribution, expressed by the venom duct.

It is found in the secreted. The protein is Conotoxin ArMSGL-0141 of Conus arenatus (Sand-dusted cone).